The primary structure comprises 129 residues: Small ribosomal subunit protein uS11c (129 aa).

This sequence belongs to the universal ribosomal protein uS11 family. As to quaternary structure, part of the 30S ribosomal subunit.

It localises to the plastid. The protein resides in the chloroplast. In Rhodomonas salina (Cryptomonas salina), this protein is Small ribosomal subunit protein uS11c.